The following is a 343-amino-acid chain: GTPase Obg (343 aa).

Residues 1-159 (MKFLDEAKVY…HWLWLRLKLI (159 aa)) enclose the Obg domain. Residues 160–327 (ADAGLVGLPN…ALRALLAAMD (168 aa)) enclose the OBG-type G domain. GTP contacts are provided by residues 166-173 (GLPNAGKS), 191-195 (FTTLH), 212-215 (DIPG), 279-282 (SKAD), and 308-310 (SAA). Residues Ser-173 and Thr-193 each coordinate Mg(2+).

This sequence belongs to the TRAFAC class OBG-HflX-like GTPase superfamily. OBG GTPase family. In terms of assembly, monomer. Mg(2+) is required as a cofactor.

It is found in the cytoplasm. Functionally, an essential GTPase which binds GTP, GDP and possibly (p)ppGpp with moderate affinity, with high nucleotide exchange rates and a fairly low GTP hydrolysis rate. Plays a role in control of the cell cycle, stress response, ribosome biogenesis and in those bacteria that undergo differentiation, in morphogenesis control. This is GTPase Obg from Methylobacterium sp. (strain 4-46).